Consider the following 391-residue polypeptide: Polyketide synthase 3 (391 aa).

Cys-164 is a catalytic residue.

Belongs to the thiolase-like superfamily. Chalcone/stilbene synthases family. In terms of assembly, homodimer.

The catalysed reaction is (E)-4-coumaroyl-CoA + 3 malonyl-CoA + 3 H(+) = 2',4,4',6'-tetrahydroxychalcone + 3 CO2 + 4 CoA. It functions in the pathway secondary metabolite biosynthesis; flavonoid biosynthesis. Polyketide synthase producing p-coumaryltriacetic acid lactone (CTAL) and slightly naringenin chalcone. Can use p-coumaryl-CoA as substrate. This is Polyketide synthase 3 (PKS3) from Rubus idaeus (Raspberry).